The primary structure comprises 934 residues: Serine/threonine-protein kinase PknD (934 aa).

One can recognise a Protein kinase domain in the interval 4–296 (YELIRLIGRG…ELRKALQPHL (293 aa)). ATP contacts are provided by residues 10–18 (IGRGGMGEV) and Lys-33. The Proton acceptor role is filled by Asp-138.

It belongs to the protein kinase superfamily. Ser/Thr protein kinase family. Autophosphorylated on serine and threonine residues.

It catalyses the reaction L-seryl-[protein] + ATP = O-phospho-L-seryl-[protein] + ADP + H(+). The enzyme catalyses L-threonyl-[protein] + ATP = O-phospho-L-threonyl-[protein] + ADP + H(+). Together with the serine/threonine kinase Pkn1, may play a role in the specific interactions with host proteins during intracellular growth. This chain is Serine/threonine-protein kinase PknD, found in Chlamydia muridarum (strain MoPn / Nigg).